Here is a 350-residue protein sequence, read N- to C-terminus: UDP-glucose 4-epimerase (350 aa).

7 to 38 (KILVTGSAGFIGTHTVVQLLNNGFNVSIIDNF) contacts NAD(+). Residue Ser-133 participates in substrate binding. Tyr-157 serves as the catalytic Proton acceptor.

This sequence belongs to the NAD(P)-dependent epimerase/dehydratase family. The cofactor is NAD(+).

The enzyme catalyses UDP-alpha-D-glucose = UDP-alpha-D-galactose. The protein operates within carbohydrate metabolism; galactose metabolism. This chain is UDP-glucose 4-epimerase (GALE), found in Pisum sativum (Garden pea).